Consider the following 311-residue polypeptide: DNA repair and recombination protein RadA (311 aa).

104–111 (GEFGSGKS) is an ATP binding site.

Belongs to the eukaryotic RecA-like protein family.

In terms of biological role, involved in DNA repair and in homologous recombination. Binds and assemble on single-stranded DNA to form a nucleoprotein filament. Hydrolyzes ATP in a ssDNA-dependent manner and promotes DNA strand exchange between homologous DNA molecules. This is DNA repair and recombination protein RadA from Methanosphaera stadtmanae (strain ATCC 43021 / DSM 3091 / JCM 11832 / MCB-3).